The sequence spans 406 residues: Accessory Sec system protein translocase subunit SecY2 (406 aa).

The next 10 helical transmembrane spans lie at 14-34, 63-83, 108-128, 131-151, 156-176, 190-210, 246-266, 285-305, 344-364, and 368-388; these read SWTV…LPFI, FSLF…WQMF, FAIA…EVGI, GLAI…LVWL, SFFG…ANLP, LPII…AVIV, FMYA…IQIL, PIWL…FAFV, AVIG…IVLI, and YLQL…VYNV.

It belongs to the SecY/SEC61-alpha family. SecY2 subfamily. Component of the accessory SecA2/SecY2 protein translocase complex required to export cell wall proteins. May form heterotrimers with SecE and SecG subunits.

The protein localises to the cell membrane. Its function is as follows. Part of the accessory SecA2/SecY2 system specifically required for export of possible cell wall proteins. The central subunit of a protein translocation channel. In Streptococcus salivarius (strain CCHSS3), this protein is Accessory Sec system protein translocase subunit SecY2.